The following is a 1798-amino-acid chain: DNA polymerase II large subunit (1798 aa).

The tract at residues 286 to 309 (EKGKSSEENKDESKAEDTGTESVA) is disordered. The DOD-type homing endonuclease domain occupies 1184-1319 (VVGYYLAEGY…ETLLLAKFGI (136 aa)). Positions 1699–1798 (TGHSNGKNGY…GISLDEFFGS (100 aa)) are disordered. A compositionally biased stretch (low complexity) spans 1714 to 1731 (GKNGKASKKSGSLASKLS). Residues 1733 to 1753 (KGKEPSKKKESAKPKRSEKVK) show a composition bias toward basic and acidic residues.

Belongs to the archaeal DNA polymerase II family. As to quaternary structure, heterodimer of a large subunit and a small subunit. In terms of processing, this protein undergoes a protein self splicing that involves a post-translational excision of the intervening region (intein) followed by peptide ligation.

The enzyme catalyses DNA(n) + a 2'-deoxyribonucleoside 5'-triphosphate = DNA(n+1) + diphosphate. It carries out the reaction Exonucleolytic cleavage in the 3'- to 5'-direction to yield nucleoside 5'-phosphates.. Its function is as follows. Possesses two activities: a DNA synthesis (polymerase) and an exonucleolytic activity that degrades single-stranded DNA in the 3'- to 5'-direction. Has a template-primer preference which is characteristic of a replicative DNA polymerase. The polypeptide is DNA polymerase II large subunit (polC) (Thermococcus kodakarensis (strain ATCC BAA-918 / JCM 12380 / KOD1) (Pyrococcus kodakaraensis (strain KOD1))).